Reading from the N-terminus, the 295-residue chain is Small ribosomal subunit biogenesis GTPase RsgA (295 aa).

The region spanning K68–L228 is the CP-type G domain. Residues N117–D120 and G170–S178 contribute to the GTP site. Residues C250, C255, H257, and C263 each coordinate Zn(2+).

It belongs to the TRAFAC class YlqF/YawG GTPase family. RsgA subfamily. In terms of assembly, monomer. Associates with 30S ribosomal subunit, binds 16S rRNA. Zn(2+) serves as cofactor.

The protein resides in the cytoplasm. Functionally, one of several proteins that assist in the late maturation steps of the functional core of the 30S ribosomal subunit. Helps release RbfA from mature subunits. May play a role in the assembly of ribosomal proteins into the subunit. Circularly permuted GTPase that catalyzes slow GTP hydrolysis, GTPase activity is stimulated by the 30S ribosomal subunit. This Thermotoga maritima (strain ATCC 43589 / DSM 3109 / JCM 10099 / NBRC 100826 / MSB8) protein is Small ribosomal subunit biogenesis GTPase RsgA.